The chain runs to 254 residues: Small ribosomal subunit protein uS2 (254 aa).

The protein belongs to the universal ribosomal protein uS2 family.

The sequence is that of Small ribosomal subunit protein uS2 from Legionella pneumophila (strain Lens).